We begin with the raw amino-acid sequence, 119 residues long: Phytosulfokines 2 (119 aa).

An N-terminal signal peptide occupies residues M1–A34. A propeptide spanning residues A35–D109 is cleaved from the precursor. Y110 and Y112 each carry sulfotyrosine. The propeptide occupies H115 to P119.

Belongs to the phytosulfokine family. In terms of processing, sulfation is important for activity and for the binding to a putative membrane receptor. Post-translationally, PSK-alpha is produced by endopeptidase digestion. PSK-beta is produced from PSK-alpha by exopeptidase digestion.

The protein localises to the secreted. Functionally, promotes plant cell differentiation, organogenesis and somatic embryogenesis as well as cell proliferation. This Oryza sativa subsp. indica (Rice) protein is Phytosulfokines 2 (PSK2).